The sequence spans 278 residues: Probable septum site-determining protein MinC (278 aa).

It belongs to the MinC family. As to quaternary structure, interacts with MinD and FtsZ.

Cell division inhibitor that blocks the formation of polar Z ring septums. Rapidly oscillates between the poles of the cell to destabilize FtsZ filaments that have formed before they mature into polar Z rings. Prevents FtsZ polymerization. The sequence is that of Probable septum site-determining protein MinC from Gloeobacter violaceus (strain ATCC 29082 / PCC 7421).